Reading from the N-terminus, the 274-residue chain is Large ribosomal subunit protein uL2cz/uL2cy (274 aa).

The segment at 225–274 (NPVDHPHGGGEGRAPIGRKKPTTPWGYPALGRRSRKRKKYSDSFILRRRK) is disordered.

Belongs to the universal ribosomal protein uL2 family. Part of the 50S ribosomal subunit.

It is found in the plastid. The protein resides in the chloroplast. This is Large ribosomal subunit protein uL2cz/uL2cy (rpl2-A) from Dioscorea elephantipes (Elephant's foot yam).